The sequence spans 723 residues: Polyribonucleotide nucleotidyltransferase (723 aa).

The Mg(2+) site is built by Asp488 and Asp494. The KH domain maps to 555–614 (PRMITMKIHPDKIREVIGKGGSTIQALTKETGTTIDIQEDGTITIASTSTDGMAEAKRRI). Residues 624–692 (GKIYAGTVLK…EKGRLRLSLK (69 aa)) form the S1 motif domain. Positions 701 to 723 (SISPINAGEAAAPAAPAEGSEQQ) are disordered. The segment covering 707-723 (AGEAAAPAAPAEGSEQQ) has biased composition (low complexity).

This sequence belongs to the polyribonucleotide nucleotidyltransferase family. Mg(2+) serves as cofactor.

The protein localises to the cytoplasm. The catalysed reaction is RNA(n+1) + phosphate = RNA(n) + a ribonucleoside 5'-diphosphate. Involved in mRNA degradation. Catalyzes the phosphorolysis of single-stranded polyribonucleotides processively in the 3'- to 5'-direction. This chain is Polyribonucleotide nucleotidyltransferase, found in Cupriavidus necator (strain ATCC 17699 / DSM 428 / KCTC 22496 / NCIMB 10442 / H16 / Stanier 337) (Ralstonia eutropha).